We begin with the raw amino-acid sequence, 388 residues long: Succinate--CoA ligase [ADP-forming] subunit beta (388 aa).

Residues 9-245 (KELLKSYGLP…KSQENERELK (237 aa)) enclose the ATP-grasp domain. Residues Lys46, 53 to 55 (GRG), Glu100, Tyr103, and Glu108 contribute to the ATP site. Asn200 and Asp214 together coordinate Mg(2+). Substrate contacts are provided by residues Asn265 and 322-324 (GIV).

This sequence belongs to the succinate/malate CoA ligase beta subunit family. Heterotetramer of two alpha and two beta subunits. Mg(2+) serves as cofactor.

It carries out the reaction succinate + ATP + CoA = succinyl-CoA + ADP + phosphate. It catalyses the reaction GTP + succinate + CoA = succinyl-CoA + GDP + phosphate. The protein operates within carbohydrate metabolism; tricarboxylic acid cycle; succinate from succinyl-CoA (ligase route): step 1/1. Its function is as follows. Succinyl-CoA synthetase functions in the citric acid cycle (TCA), coupling the hydrolysis of succinyl-CoA to the synthesis of either ATP or GTP and thus represents the only step of substrate-level phosphorylation in the TCA. The beta subunit provides nucleotide specificity of the enzyme and binds the substrate succinate, while the binding sites for coenzyme A and phosphate are found in the alpha subunit. The polypeptide is Succinate--CoA ligase [ADP-forming] subunit beta (Psychrobacter cryohalolentis (strain ATCC BAA-1226 / DSM 17306 / VKM B-2378 / K5)).